The sequence spans 284 residues: HTH-type transcriptional activator RhaR (284 aa).

An HTH araC/xylS-type domain is found at 181–279 (DMLMNALRAS…GVSPSAYRQR (99 aa)). DNA-binding regions (H-T-H motif) lie at residues 198–219 (EAFC…KEQT) and 246–269 (IGDV…HQAF).

As to quaternary structure, binds DNA as a dimer.

It localises to the cytoplasm. Its function is as follows. Activates expression of the rhaSR operon in response to L-rhamnose. The protein is HTH-type transcriptional activator RhaR of Pectobacterium atrosepticum (strain SCRI 1043 / ATCC BAA-672) (Erwinia carotovora subsp. atroseptica).